Reading from the N-terminus, the 598-residue chain is Chromodomain Y-like protein (598 aa).

The interval 1–76 (MTFQASHRSA…VDKRKNKKGK (76 aa)) is disordered. A compositionally biased stretch (polar residues) spans 44–56 (PSISVSSEQSGAQ). In terms of domain architecture, Chromo spans 61 to 121 (LQVERIVDKR…RHTEKQKEST (61 aa)). An interaction with EZH2 region spans residues 61–309 (LQVERIVDKR…NIQTSVTGVT (249 aa)). Residues 65–76 (RIVDKRKNKKGK) show a composition bias toward basic and acidic residues. Phosphoserine is present on Ser88. Residues 112-121 (RHTEKQKEST) show a composition bias toward basic and acidic residues. Positions 112–149 (RHTEKQKESTLTRTNRTSPNNARKQISRSTNSNFSKTS) are disordered. The segment covering 122–149 (LTRTNRTSPNNARKQISRSTNSNFSKTS) has biased composition (polar residues). Lys135 carries the N6,N6,N6-trimethyllysine; by EHMT2; alternate modification. Lys135 carries the N6,N6-dimethyllysine; by EHMT2; alternate modification. Lys135 carries the post-translational modification N6-methyllysine; by EHMT2; alternate. A phosphoserine mark is found at Ser170, Ser201, and Ser216. A disordered region spans residues 204–226 (KSRTAVDGFQSESPEKLDPVEQG). The interval 362-594 (SENNSLNPEV…DSMLKYLQRK (233 aa)) is acetyl-CoA-binding domain.

In terms of assembly, forms multimers and multimerization is required for stable binding to chromatin. Interacts with HDAC1 and HDAC2 via its C-terminal acetyl-CoA-binding domain. Interacts with EZH2, EED, SUZ12, REST, EHMT1 and EHMT2. Part of a complex containing at least CDYL, REST, WIZ, SETB1, EHMT1 and EHMT2. Part of a complex containing at least CDYL, MIER1, MIER2, HDAC1 and HDAC2. Interacts with CHAF1A and CHAF1B; bridging the CAF-1 complex to the MCM2-7 (MCM) complex. Interacts with MCM3 and MCM5; bridging the CAF-1 complex to the MCM2-7 (MCM) complex. Recruited to Xist RNA-coated X chromosome. Interacts with EHMT2 and PRDM9; interaction only takes place when PRDM9 is bound to hotspot DNA. Expressed in the hippocampus with reduced expression in epileptic tissue compared to normal adjacent tissue (at protein level). Ubiquitous. Expressed at moderate levels in all tissues examined. Isoform 2: Most abundantly expressed isoform.

The protein localises to the nucleus. It localises to the chromosome. It catalyses the reaction 3-hydroxybutanoyl-CoA = (2E)-butenoyl-CoA + H2O. Its function is as follows. Chromatin reader protein that recognizes and binds histone H3 trimethylated at 'Lys-9', dimethylated at 'Lys-27' and trimethylated at 'Lys-27' (H3K9me3, H3K27me2 and H3K27me3, respectively). Part of multimeric repressive chromatin complexes, where it is required for transmission and restoration of repressive histone marks, thereby preserving the epigenetic landscape. Required for chromatin targeting and maximal enzymatic activity of Polycomb repressive complex 2 (PRC2); acts as a positive regulator of PRC2 activity by bridging the pre-existing histone H3K27me3 and newly recruited PRC2 on neighboring nucleosomes. Acts as a corepressor for REST by facilitating histone-lysine N-methyltransferase EHMT2 recruitment and H3K9 dimethylation at REST target genes for repression. Involved in X chromosome inactivation in females: recruited to Xist RNA-coated X chromosome and facilitates propagation of H3K9me2 by anchoring EHMT2. Promotes EZH2 accumulation and H3K27me3 methylation at DNA double strand breaks (DSBs), thereby facilitating transcriptional repression at sites of DNA damage and homology-directed repair of DSBs. Required for neuronal migration during brain development by repressing expression of RHOA. By repressing the expression of SCN8A, contributes to the inhibition of intrinsic neuronal excitability and epileptogenesis. In addition to acting as a chromatin reader, acts as a hydro-lyase. Shows crotonyl-coA hydratase activity by mediating the conversion of crotonyl-CoA ((2E)-butenoyl-CoA) to beta-hydroxybutyryl-CoA (3-hydroxybutanoyl-CoA), thereby acting as a negative regulator of histone crotonylation. Histone crotonylation is required during spermatogenesis; down-regulation of histone crotonylation by CDYL regulates the reactivation of sex chromosome-linked genes in round spermatids and histone replacement in elongating spermatids. By regulating histone crotonylation and trimethylation of H3K27, may be involved in stress-induced depression-like behaviors, possibly by regulating VGF expression. Not able to recognize and bind histone H3K9me3, histone H3K27me2 and histone H3K27me3, due to the presence of a N-terminal extension that inactivates the chromo domain. In terms of biological role, not able to recognize and bind histone H3K9me3, histone H3K27me2 and histone H3K27me3, due to the absence of the chromo domain. Acts as a negative regulator of isoform 2 by displacing isoform 2 from chromatin. This is Chromodomain Y-like protein from Homo sapiens (Human).